We begin with the raw amino-acid sequence, 511 residues long: Glucans biosynthesis protein G (511 aa).

A signal peptide spans 1-22 (MMKMRWLSAAVMLTLYTSSSWA).

This sequence belongs to the OpgD/OpgG family.

It is found in the periplasm. The protein operates within glycan metabolism; osmoregulated periplasmic glucan (OPG) biosynthesis. Involved in the biosynthesis of osmoregulated periplasmic glucans (OPGs). The protein is Glucans biosynthesis protein G of Escherichia coli O81 (strain ED1a).